The primary structure comprises 61 residues: MDPNCSCTTGVSCACTGSCTCKECKCTSCKKSCCSCCPVGCAKCAHGCVCKGTLENCSCCA.

Positions 1-29 are beta; the sequence is MDPNCSCTTGVSCACTGSCTCKECKCTSC. Cys-5, Cys-7, Cys-13, Cys-15, Cys-19, Cys-21, Cys-24, Cys-26, Cys-29, Cys-33, Cys-34, Cys-36, Cys-37, Cys-41, Cys-44, Cys-48, Cys-50, Cys-57, Cys-59, and Cys-60 together coordinate a divalent metal cation. The interval 30 to 61 is alpha; it reads KKSCCSCCPVGCAKCAHGCVCKGTLENCSCCA.

This sequence belongs to the metallothionein superfamily. Type 1 family. In terms of assembly, monomer.

Metallothioneins have a high content of cysteine residues that bind various heavy metals; these proteins are transcriptionally regulated by both heavy metals and glucocorticoids. The protein is Metallothionein-1M (MT1M) of Homo sapiens (Human).